A 223-amino-acid chain; its full sequence is Deoxyribose-phosphate aldolase (223 aa).

Residue D89 is the Proton donor/acceptor of the active site. K152 serves as the catalytic Schiff-base intermediate with acetaldehyde. K181 acts as the Proton donor/acceptor in catalysis.

The protein belongs to the DeoC/FbaB aldolase family. DeoC type 1 subfamily.

It is found in the cytoplasm. It carries out the reaction 2-deoxy-D-ribose 5-phosphate = D-glyceraldehyde 3-phosphate + acetaldehyde. The protein operates within carbohydrate degradation; 2-deoxy-D-ribose 1-phosphate degradation; D-glyceraldehyde 3-phosphate and acetaldehyde from 2-deoxy-alpha-D-ribose 1-phosphate: step 2/2. Functionally, catalyzes a reversible aldol reaction between acetaldehyde and D-glyceraldehyde 3-phosphate to generate 2-deoxy-D-ribose 5-phosphate. In Listeria monocytogenes serotype 4b (strain F2365), this protein is Deoxyribose-phosphate aldolase.